The primary structure comprises 1505 residues: ABC transporter C family member 13 (1505 aa).

Helical transmembrane passes span 11-31, 54-68, 71-91, 102-122, 131-151, 171-191, 313-333, 336-356, 367-387, 421-441, 447-467, and 534-554; these read EAAAAAAHAALLALALLLLLL, AVDGGLAAASSVGAW, AALACCGYALLAQVAALSYEV, ALLLPAVQALAWAALLALAMQ, FPVLVRVWWVVSFVLCVGIAY, MVANFASAPALGFLCLVGVMG, AFAAVNTIVSYVGPYLISYFV, LSGKIEFPHEGYILASVFFVA, WYLGVDVMGIHVKSGLTAMVY, AWYFHDIWMLPLQIILALAIL, IAMVSTLVATVLSIAASVPVA, and FVFWSSPIFVAVITFGTCILL. In terms of domain architecture, ABC transmembrane type-1 1 spans 314–589; the sequence is FAAVNTIVSY…FPDLISMIAQ (276 aa). The ABC transporter 1 domain occupies 623 to 846; that stretch reads ININDATFSW…GTDFNALVCA (224 aa). 658 to 665 is a binding site for ATP; sequence GVIGSGKS. Residues 881–897 are compositionally biased toward polar residues; it reads DNLKNKVSNNEKPSSTR. The segment at 881-919 is disordered; it reads DNLKNKVSNNEKPSSTRGIKEKKKKPEERKKKRSVQEEE. A compositionally biased stretch (basic and acidic residues) spans 904-919; it reads KKPEERKKKRSVQEEE. The next 6 helical transmembrane spans lie at 940 to 960, 980 to 1000, 1055 to 1077, 1081 to 1103, 1149 to 1169, and 1174 to 1194; these read GTLIPLIILAQTMFQVLQIAS, SVVLLVVYMSLAFGSSLFVFV, IAFRLGGFASTTIQLLGIVAVMS, WQVLILIVPMAVACMWMQRYYIA, LLDCFARPLFSSLAAIEWLCL, and LSTFVFAFCMAILVSFPPGTI. Positions 945–1215 constitute an ABC transmembrane type-1 2 domain; that stretch reads LIILAQTMFQ…GLNLNARMSR (271 aa). The region spanning 1262–1496 is the ABC transporter 2 domain; it reads IELVDLKVRY…KSSMFMQLVS (235 aa). ATP is bound at residue 1296–1303; it reads GRTGSGKS.

The protein belongs to the ABC transporter superfamily. ABCC family. Conjugate transporter (TC 3.A.1.208) subfamily.

The protein localises to the membrane. Functionally, ABC transporter that may affect phytic acid transport and compartmentalization. May function directly or indirectly in removing phytic acid from the cytosol or in vesicle trafficking. Required for phytic acid accumulation in developing seeds. Phytic acid is the primary storage form of phosphorus in cereal grains and other plant seeds. The polypeptide is ABC transporter C family member 13 (Oryza sativa subsp. indica (Rice)).